The sequence spans 1040 residues: Multidrug resistance protein MdtB (1040 aa).

A run of 11 helical transmembrane segments spans residues 15–37, 345–362, 367–389, 396–418, 438–460, 472–494, 535–557, 867–889, 909–931, 968–990, and 1000–1022; these read LFIM…GIIG, FELM…YLFL, ATII…MVFL, LTLM…VIEN, GEIG…PLLF, FAIT…TPMM, HPWL…WVFI, VWLI…ESFI, LMIA…IGIV, ILMT…GVGA, and MVGG…YLLF.

This sequence belongs to the resistance-nodulation-cell division (RND) (TC 2.A.6) family. MdtB subfamily. In terms of assembly, part of a tripartite efflux system composed of MdtA, MdtB and MdtC. MdtB forms a heteromultimer with MdtC.

It localises to the cell inner membrane. Its function is as follows. The MdtABC tripartite complex confers resistance against novobiocin and deoxycholate. The polypeptide is Multidrug resistance protein MdtB (Escherichia coli O157:H7).